Consider the following 83-residue polypeptide: Cytochrome b559 subunit alpha (83 aa).

The chain crosses the membrane as a helical span at residues 21–35 (VIHSITIPSLFIAGW). A heme-binding site is contributed by His23.

It belongs to the PsbE/PsbF family. As to quaternary structure, heterodimer of an alpha subunit and a beta subunit. PSII is composed of 1 copy each of membrane proteins PsbA, PsbB, PsbC, PsbD, PsbE, PsbF, PsbH, PsbI, PsbJ, PsbK, PsbL, PsbM, PsbT, PsbX, PsbY, PsbZ, Psb30/Ycf12, at least 3 peripheral proteins of the oxygen-evolving complex and a large number of cofactors. It forms dimeric complexes. Heme b is required as a cofactor.

It is found in the plastid. It localises to the chloroplast thylakoid membrane. In terms of biological role, this b-type cytochrome is tightly associated with the reaction center of photosystem II (PSII). PSII is a light-driven water:plastoquinone oxidoreductase that uses light energy to abstract electrons from H(2)O, generating O(2) and a proton gradient subsequently used for ATP formation. It consists of a core antenna complex that captures photons, and an electron transfer chain that converts photonic excitation into a charge separation. This Huperzia lucidula (Shining clubmoss) protein is Cytochrome b559 subunit alpha.